Reading from the N-terminus, the 157-residue chain is SsrA-binding protein (157 aa).

Residues 126 to 157 (GLGKGKQAHDKREAVKERDWQRDRARLMRDRG) are disordered. Basic and acidic residues predominate over residues 132–157 (QAHDKREAVKERDWQRDRARLMRDRG).

The protein belongs to the SmpB family.

It localises to the cytoplasm. Required for rescue of stalled ribosomes mediated by trans-translation. Binds to transfer-messenger RNA (tmRNA), required for stable association of tmRNA with ribosomes. tmRNA and SmpB together mimic tRNA shape, replacing the anticodon stem-loop with SmpB. tmRNA is encoded by the ssrA gene; the 2 termini fold to resemble tRNA(Ala) and it encodes a 'tag peptide', a short internal open reading frame. During trans-translation Ala-aminoacylated tmRNA acts like a tRNA, entering the A-site of stalled ribosomes, displacing the stalled mRNA. The ribosome then switches to translate the ORF on the tmRNA; the nascent peptide is terminated with the 'tag peptide' encoded by the tmRNA and targeted for degradation. The ribosome is freed to recommence translation, which seems to be the essential function of trans-translation. In Methylobacterium radiotolerans (strain ATCC 27329 / DSM 1819 / JCM 2831 / NBRC 15690 / NCIMB 10815 / 0-1), this protein is SsrA-binding protein.